Consider the following 1175-residue polypeptide: Solute carrier family 9 member C1 (1175 aa).

The Extracellular portion of the chain corresponds to Met1–Glu39. A helical transmembrane segment spans residues Ile40–Lys59. Residues Asp60–Pro64 lie on the Cytoplasmic side of the membrane. Residues Leu65–Ala82 form a helical membrane-spanning segment. Over Ser83–Pro98 the chain is Extracellular. A helical transmembrane segment spans residues Asp99–Phe115. Residues Asp116–Leu125 lie on the Cytoplasmic side of the membrane. A helical transmembrane segment spans residues Phe126–Val151. Positions Phe126–His213 are transport core domain. Over Asn152–Lys157 the chain is Extracellular. Residues Thr158–Leu183 traverse the membrane as a helical segment. At Gly184–Ser186 the chain is on the cytoplasmic side. A helical transmembrane segment spans residues Arg187–Val212. At His213–Leu225 the chain is on the extracellular side. Residues Ala226–Thr257 traverse the membrane as a helical segment. The Cytoplasmic segment spans residues Ile258–Asp261. Residues Asp262–Val283 form a helical membrane-spanning segment. Residues Gly284 to Ser286 are Extracellular-facing. A helical membrane pass occupies residues Gly287–Ser300. Residues Thr301 to Val307 lie on the Cytoplasmic side of the membrane. Residues Glu308–Tyr339 form a helical membrane-spanning segment. Over Leu340 to Phe344 the chain is Extracellular. The helical transmembrane segment at Ser345–Arg374 threads the bilayer. The tract at residues Ser345–Leu446 is transport core domain. The Cytoplasmic segment spans residues Leu375–Ser380. The helical transmembrane segment at Trp381–Leu411 threads the bilayer. Topologically, residues Gly412–Arg415 are extracellular. Residues Glu416–Leu446 traverse the membrane as a helical segment. At Gly447 to Glu632 the chain is on the cytoplasmic side. The tract at residues Tyr618–Phe698 is ion transport-like. A helical transmembrane segment spans residues Phe633 to Ile653. The Extracellular portion of the chain corresponds to Ser654–Lys657. The chain crosses the membrane as a helical span at residues Asp658–Ala684. The Cytoplasmic portion of the chain corresponds to Ala685–Phe691. The helical transmembrane segment at Ser692 to Asp716 threads the bilayer. Over Ser717–Leu724 the chain is Extracellular. Residues Thr725–Leu751 form a helical membrane-spanning segment. Topologically, residues Gln752–Ile1175 are cytoplasmic. Residues Met1137 to Phe1146 are compositionally biased toward basic and acidic residues. Residues Met1137–Ile1175 are disordered. Residues Glu1164–Ile1175 are compositionally biased toward acidic residues.

Belongs to the monovalent cation:proton antiporter 1 (CPA1) transporter (TC 2.A.36) family. As to quaternary structure, interacts with soluble adenylyl cyclase (sAC). Testis-specific. Specifically present in the principal piece of sperm tail (at protein level).

The protein resides in the cell projection. It localises to the cilium. It is found in the flagellum membrane. In terms of biological role, sperm-specific solute carrier involved in intracellular pH regulation of spermatozoa. Required for sperm motility and fertility. Involved in sperm cell hyperactivation, a step needed for sperm motility which is essential late in the preparation of sperm for fertilization. Required for the expression and bicarbonate regulation of the soluble adenylyl cyclase (sAC). This is Solute carrier family 9 member C1 (Slc9c1) from Mus musculus (Mouse).